We begin with the raw amino-acid sequence, 321 residues long: tRNA-dihydrouridine synthase B (321 aa).

Residues 16–18 (PMA) and Gln-70 contribute to the FMN site. Cys-100 serves as the catalytic Proton donor. Residues Lys-139, 200-202 (NGD), and 224-225 (GR) contribute to the FMN site.

It belongs to the Dus family. DusB subfamily. FMN is required as a cofactor.

The enzyme catalyses a 5,6-dihydrouridine in tRNA + NAD(+) = a uridine in tRNA + NADH + H(+). The catalysed reaction is a 5,6-dihydrouridine in tRNA + NADP(+) = a uridine in tRNA + NADPH + H(+). Functionally, catalyzes the synthesis of 5,6-dihydrouridine (D), a modified base found in the D-loop of most tRNAs, via the reduction of the C5-C6 double bond in target uridines. This is tRNA-dihydrouridine synthase B from Pectobacterium carotovorum (Erwinia carotovora).